The chain runs to 79 residues: Dolichyl-diphosphooligosaccharide--protein glycosyltransferase subunit TMEM258 (79 aa).

Transmembrane regions (helical) follow at residues 18-38 (LPLLATVLCGVGLLLLAAFTM) and 55-75 (FIAATSSIFLGFGSVFLLLWV).

It belongs to the OST5 family. As to quaternary structure, component of the oligosaccharyltransferase (OST) complex.

It localises to the membrane. It functions in the pathway protein modification; protein glycosylation. Functionally, subunit of the oligosaccharyl transferase (OST) complex that catalyzes the initial transfer of a defined glycan (Glc(3)Man(9)GlcNAc(2) in eukaryotes) from the lipid carrier dolichol-pyrophosphate to an asparagine residue within an Asn-X-Ser/Thr consensus motif in nascent polypeptide chains, the first step in protein N-glycosylation. N-glycosylation occurs cotranslationally and the complex associates with the Sec61 complex at the channel-forming translocon complex that mediates protein translocation across the endoplasmic reticulum (ER). All subunits are required for a maximal enzyme activity. In Caenorhabditis briggsae, this protein is Dolichyl-diphosphooligosaccharide--protein glycosyltransferase subunit TMEM258.